The following is a 113-amino-acid chain: Large ribosomal subunit protein uL22 (113 aa).

Belongs to the universal ribosomal protein uL22 family. In terms of assembly, part of the 50S ribosomal subunit.

Its function is as follows. This protein binds specifically to 23S rRNA; its binding is stimulated by other ribosomal proteins, e.g. L4, L17, and L20. It is important during the early stages of 50S assembly. It makes multiple contacts with different domains of the 23S rRNA in the assembled 50S subunit and ribosome. Functionally, the globular domain of the protein is located near the polypeptide exit tunnel on the outside of the subunit, while an extended beta-hairpin is found that lines the wall of the exit tunnel in the center of the 70S ribosome. The polypeptide is Large ribosomal subunit protein uL22 (Chloroflexus aggregans (strain MD-66 / DSM 9485)).